We begin with the raw amino-acid sequence, 325 residues long: Solute-binding protein RD1_1052 (325 aa).

A signal peptide spans 1–26 (MRLFTKIKGLAAVTCVAALASSAAFA). D-mannonate is bound by residues E75, 93–95 (GES), 148–151 (RGPR), R171, and N211. Residues E75, 93–95 (GES), 148–151 (RGPR), R171, and N211 each bind L-galactonate.

The protein belongs to the bacterial solute-binding protein 7 family. As to quaternary structure, the complex is comprised of an extracytoplasmic solute-binding protein and a heteromeric permease formed by two transmembrane proteins.

The protein localises to the periplasm. Its function is as follows. Solute-binding protein that binds L-galactonate and D-mannonate (in vitro). Probably part of a tripartite ATP-independent periplasmic (TRAP) transport system that mediates solute transport into the cytoplasm. This is Solute-binding protein RD1_1052 from Roseobacter denitrificans (strain ATCC 33942 / OCh 114) (Erythrobacter sp. (strain OCh 114)).